Consider the following 233-residue polypeptide: Small ribosomal subunit protein uS2c (233 aa).

It belongs to the universal ribosomal protein uS2 family.

It localises to the plastid. The protein resides in the cyanelle. This is Small ribosomal subunit protein uS2c (rps2) from Cyanophora paradoxa.